A 209-amino-acid chain; its full sequence is HTH-type transcriptional repressor BepR (209 aa).

An HTH tetR-type domain is found at 9 to 69 (AETREAILLA…SIIGRARFPQ (61 aa)). The segment at residues 32 to 51 (TLTEIACYAGVTRGAIYFHF) is a DNA-binding region (H-T-H motif).

Represses expression of bepDE. This is HTH-type transcriptional repressor BepR (bepR) from Brucella suis biovar 1 (strain 1330).